The primary structure comprises 594 residues: Glutamate decarboxylase 1 (594 aa).

Low complexity predominate over residues 1 to 13; it reads MASSTPSSSATSS. Residues 1–23 form a disordered region; the sequence is MASSTPSSSATSSNAGADPNTTN. Ser-78 is modified (phosphoserine). 190–192 provides a ligand contact to 4-aminobutanoate; the sequence is QLS. Lys-405 carries the post-translational modification N6-(pyridoxal phosphate)lysine. Arg-567 contributes to the 4-aminobutanoate binding site.

This sequence belongs to the group II decarboxylase family. Homodimer. It depends on pyridoxal 5'-phosphate as a cofactor.

It catalyses the reaction L-glutamate + H(+) = 4-aminobutanoate + CO2. Its function is as follows. Catalyzes the synthesis of the inhibitory neurotransmitter gamma-aminobutyric acid (GABA) with pyridoxal 5'-phosphate as cofactor. The sequence is that of Glutamate decarboxylase 1 (GAD1) from Bos taurus (Bovine).